The sequence spans 288 residues: Small ribosomal subunit protein uS2 (288 aa).

A disordered region spans residues 255–288 (ANNRDHKNNKNNSTIDNAENLKEENLVGGSNNES).

The protein belongs to the universal ribosomal protein uS2 family.

The polypeptide is Small ribosomal subunit protein uS2 (Ehrlichia chaffeensis (strain ATCC CRL-10679 / Arkansas)).